We begin with the raw amino-acid sequence, 311 residues long: DNA-directed RNA polymerase subunit alpha (311 aa).

An alpha N-terminal domain (alpha-NTD) region spans residues M1 to K227. The tract at residues I242 to K311 is alpha C-terminal domain (alpha-CTD).

Belongs to the RNA polymerase alpha chain family. In plastids the minimal PEP RNA polymerase catalytic core is composed of four subunits: alpha, beta, beta', and beta''. When a (nuclear-encoded) sigma factor is associated with the core the holoenzyme is formed, which can initiate transcription.

The protein localises to the plastid. The protein resides in the chloroplast. It catalyses the reaction RNA(n) + a ribonucleoside 5'-triphosphate = RNA(n+1) + diphosphate. DNA-dependent RNA polymerase catalyzes the transcription of DNA into RNA using the four ribonucleoside triphosphates as substrates. The chain is DNA-directed RNA polymerase subunit alpha from Phaeodactylum tricornutum (strain CCAP 1055/1).